Here is a 632-residue protein sequence, read N- to C-terminus: Probable potassium transport system protein Kup 3 (632 aa).

12 helical membrane passes run L17–L37, L60–L80, T106–I126, P144–V164, F175–I195, A210–L230, W254–L274, A292–I312, I344–F364, L370–F390, L401–A421, and I426–T446.

Belongs to the HAK/KUP transporter (TC 2.A.72) family.

It localises to the cell inner membrane. The enzyme catalyses K(+)(in) + H(+)(in) = K(+)(out) + H(+)(out). Transport of potassium into the cell. Likely operates as a K(+):H(+) symporter. The chain is Probable potassium transport system protein Kup 3 from Rhizobium etli (strain ATCC 51251 / DSM 11541 / JCM 21823 / NBRC 15573 / CFN 42).